The chain runs to 360 residues: Nucleoporin SEH1 (360 aa).

WD repeat units follow at residues 10-49 (DHKDLIHDVSFDFHGRRMATCSSDQSVKVWDKSESGDWHC), 55-96 (THSG…SNDK), 111-152 (DSRT…NLSQ), 160-210 (SCKL…RKYA), 217-258 (TVTD…KELT), and 276-315 (NHNSQVWRVSWNITGTVLASSGDDGCVRLWKANYMDNWKC). Residue Lys12 forms a Glycyl lysine isopeptide (Lys-Gly) (interchain with G-Cter in SUMO2) linkage. A phosphoserine mark is found at Ser179 and Ser190. Polar residues predominate over residues 324 to 354 (SPVNGSSQQGTSNPSLGSNIPSLQNSLNGSS). Positions 324–360 (SPVNGSSQQGTSNPSLGSNIPSLQNSLNGSSAGRKHS) are disordered.

Belongs to the WD repeat SEC13 family. In terms of assembly, component of the Nup107-160 subcomplex of the nuclear pore complex (NPC). The Nup107-160 subcomplex includes NUP160, NUP133, NUP107, NUP98, NUP85, NUP43, NUP37, SEH1 and SEC13. The SEH1 subunit appears to be only weakly associated with the Nup107-160 subcomplex. Component of the GATOR2 subcomplex, composed of MIOS, SEC13, SEH1L, WDR24 and WDR59. The GATOR2 complex interacts with CASTOR1 and CASTOR2; the interaction is negatively regulated by arginine. The GATOR2 complex interacts with SESN1, SESN2 and SESN3; the interaction is negatively regulated by amino acids. SESN1, SESN2 and SESN3 convey leucine availability via direct interaction with SEH1L and WDR24.

Its subcellular location is the chromosome. It localises to the centromere. The protein localises to the kinetochore. It is found in the nucleus. The protein resides in the nuclear pore complex. Its subcellular location is the lysosome membrane. The GATOR2 complex is negatively regulated by the upstream amino acid sensors CASTOR1 and SESN2, which sequester the GATOR2 complex in absence of amino acids. In the presence of abundant amino acids, GATOR2 is released from CASTOR1 and SESN2 and activated. Component of the Nup107-160 subcomplex of the nuclear pore complex (NPC). The Nup107-160 subcomplex is required for the assembly of a functional NPC. The Nup107-160 subcomplex is also required for normal kinetochore microtubule attachment, mitotic progression and chromosome segregation. This subunit plays a role in recruitment of the Nup107-160 subcomplex to the kinetochore. In terms of biological role, as a component of the GATOR2 complex, functions as an activator of the amino acid-sensing branch of the mTORC1 signaling pathway. The GATOR2 complex indirectly activates mTORC1 through the inhibition of the GATOR1 subcomplex. GATOR2 probably acts as an E3 ubiquitin-protein ligase toward GATOR1. In the presence of abundant amino acids, the GATOR2 complex mediates ubiquitination of the NPRL2 core component of the GATOR1 complex, leading to GATOR1 inactivation. In the absence of amino acids, GATOR2 is inhibited, activating the GATOR1 complex. Within the GATOR2 complex, SEC13 and SEH1L are required to stabilize the complex. In Pongo abelii (Sumatran orangutan), this protein is Nucleoporin SEH1 (SEH1L).